The sequence spans 383 residues: MSNHWLLPENIADVLPSEARKIEELRRRMLDLFRTYGYELVMPPMLEYLESLLTGTGHDLDLRTLKLVDQLSGRTMGLRADITPQVARIDAHLLNRPGVTRLCYAGNVLHARPAGFHATREPIQVGAEIYGHAGLEADVEIQELMLAALQAAGLSDIRIDLCHAGILEALLDGLPSIRRIEDALFAALETKDVSALREITQGMPQTERDALLALPTLYGGVEVIDRARATLPASPAIGRALDELVALATQVRGASINIDLSDLRGYHYHSGVMFAAYVAGLPNYVARGGRYDKVGEAFGRARPATGFSLDLREVAALSPIEVRAQAIFAPWDADPALRAAIVALRAAGEIVIQSLPGHTKELDEFNCDRQLVRQEAGWVVAPR.

This sequence belongs to the class-II aminoacyl-tRNA synthetase family. HisZ subfamily. In terms of assembly, heteromultimer composed of HisG and HisZ subunits.

The protein localises to the cytoplasm. The protein operates within amino-acid biosynthesis; L-histidine biosynthesis; L-histidine from 5-phospho-alpha-D-ribose 1-diphosphate: step 1/9. Functionally, required for the first step of histidine biosynthesis. May allow the feedback regulation of ATP phosphoribosyltransferase activity by histidine. This is ATP phosphoribosyltransferase regulatory subunit from Cupriavidus pinatubonensis (strain JMP 134 / LMG 1197) (Cupriavidus necator (strain JMP 134)).